Here is a 191-residue protein sequence, read N- to C-terminus: MQKSVDPAEGITTYKILPGEFYVTKDNERIETVLGSCISACVRDPVTGVGGMNHFMLPVDKNATGASELSDANRYGNYAMENLVNALLNAGARRERLEFKLFGGGRIMSSTTNIGWYNIGFAFDYIYTEGFKIVSQDIGDVYPRKILYYPNSGRVRVRRLNAMHNQSLAAEESRYINNIGSKPVEGDVELF.

This sequence belongs to the CheD family.

It catalyses the reaction L-glutaminyl-[protein] + H2O = L-glutamyl-[protein] + NH4(+). Functionally, probably deamidates glutamine residues to glutamate on methyl-accepting chemotaxis receptors (MCPs), playing an important role in chemotaxis. This Hydrogenovibrio crunogenus (strain DSM 25203 / XCL-2) (Thiomicrospira crunogena) protein is Probable chemoreceptor glutamine deamidase CheD.